A 101-amino-acid chain; its full sequence is Interleukin-8 (101 aa).

The signal sequence occupies residues 1-22; sequence MTSKLAVALLAAFLLSAALCEG. Position 27 is a citrulline (Arg-27). Cystine bridges form between Cys-34-Cys-61 and Cys-36-Cys-77.

This sequence belongs to the intercrine alpha (chemokine CxC) family. Homodimer. Interacts with TNFAIP6 (via Link domain); this interaction interferes with chemokine binding to glycosaminoglycans. Post-translationally, citrullination at Arg-27 prevents proteolysis, and dampens tissue inflammation, it also enhances leukocytosis, possibly through impaired chemokine clearance from the blood circulation.

The protein resides in the secreted. Its function is as follows. Chemotactic factor that mediates inflammatory response by attracting neutrophils, basophils, and T-cells to clear pathogens and protect the host from infection. Also plays an important role in neutrophil activation. Released in response to an inflammatory stimulus, exerts its effect by binding to the G-protein-coupled receptors CXCR1 and CXCR2, primarily found in neutrophils, monocytes and endothelial cells. G-protein heterotrimer (alpha, beta, gamma subunits) constitutively binds to CXCR1/CXCR2 receptor and activation by IL8 leads to beta and gamma subunits release from Galpha (GNAI2 in neutrophils) and activation of several downstream signaling pathways including PI3K and MAPK pathways. This chain is Interleukin-8 (CXCL8), found in Macaca mulatta (Rhesus macaque).